Reading from the N-terminus, the 850-residue chain is Mitogen-activated protein kinase kinase kinase 11 (850 aa).

S11 carries the phosphoserine modification. A compositionally biased stretch (gly residues) spans 18–31 (GSGSGGGGGSGGVR). The tract at residues 18 to 37 (GSGSGGGGGSGGVRPEGSPK) is disordered. S35 carries the phosphoserine modification. One can recognise an SH3 domain in the interval 42–106 (YANPVWTALF…PSNYVSRGGG (65 aa)). Positions 118–380 (LRLEEVIGIG…ASILQQLEAL (263 aa)) constitute a Protein kinase domain. Residues 124 to 132 (IGIGGFGKV) and K145 each bind ATP. D242 functions as the Proton acceptor in the catalytic mechanism. T278 is modified (phosphothreonine; by autocatalysis). Position 282 is a phosphoserine; by autocatalysis and MAP4K1 (S282). S395 is modified (phosphoserine). Leucine-zipper regions lie at residues 404 to 425 (IQGL…EEEL) and 439 to 460 (LRRR…ELTL). Phosphoserine is present on residues S508, S525, S549, S556, and S557. The interval 536–850 (LEPAESGQTW…QAPWAPEAGP (315 aa)) is disordered. The segment covering 551 to 563 (RRLDDSSNGERRA) has biased composition (basic and acidic residues). Residues 598 to 610 (SSPLGSPSTPPAL) are compositionally biased toward low complexity. S655 is subject to Phosphoserine. The span at 677 to 693 (TAPPPAQMASPCPPDLP) shows a compositional bias: pro residues. At T712 the chain carries Phosphothreonine. Phosphoserine occurs at positions 728, 731, 743, 751, 761, 773, 792, 796, and 818. Positions 790–802 (RPSPLPSPQPAPR) are enriched in pro residues. The span at 803–819 (RAPWTLFPDSDPFWDSP) shows a compositional bias: low complexity.

The protein belongs to the protein kinase superfamily. STE Ser/Thr protein kinase family. MAP kinase kinase kinase subfamily. Homodimer; undergoes dimerization during activation. Interacts with MAP2K4/MKK4. Interacts with MAP2K7/MKK7. Found in a complex with SH3RF1, RAC1, MAP2K7/MKK7, MAPK8IP1/JIP1 and MAPK8/JNK1. It depends on Mg(2+) as a cofactor. Autophosphorylation on serine and threonine residues within the activation loop plays a role in enzyme activation. Thr-278 is likely to be the main autophosphorylation site. Phosphorylation of Ser-556 and Ser-557 is induced by CDC42.

It localises to the cytoplasm. The protein resides in the cytoskeleton. The protein localises to the microtubule organizing center. Its subcellular location is the centrosome. It catalyses the reaction L-seryl-[protein] + ATP = O-phospho-L-seryl-[protein] + ADP + H(+). The enzyme catalyses L-threonyl-[protein] + ATP = O-phospho-L-threonyl-[protein] + ADP + H(+). Its activity is regulated as follows. Homodimerization via the leucine zipper domains is required for autophosphorylation and subsequent activation. Activates the JUN N-terminal pathway. Required for serum-stimulated cell proliferation and for mitogen and cytokine activation of MAPK14 (p38), MAPK3 (ERK) and MAPK8 (JNK1) through phosphorylation and activation of MAP2K4/MKK4 and MAP2K7/MKK7. Plays a role in mitogen-stimulated phosphorylation and activation of BRAF, but does not phosphorylate BRAF directly. Influences microtubule organization during the cell cycle. The chain is Mitogen-activated protein kinase kinase kinase 11 (Map3k11) from Rattus norvegicus (Rat).